A 387-amino-acid polypeptide reads, in one-letter code: 3-hydroxy-D-aspartate aldolase (387 aa).

At Lys-62 the chain carries N6-(pyridoxal phosphate)lysine. Pyridoxal 5'-phosphate-binding positions include Gln-85, Thr-238, 256 to 257 (GS), and Tyr-265. Residues His-355 and Asp-357 each coordinate Mg(2+).

Belongs to the DSD1 family. As to quaternary structure, homodimer. Pyridoxal 5'-phosphate serves as cofactor. Requires Mg(2+) as cofactor.

It catalyses the reaction (3S)-3-hydroxy-D-aspartate = glyoxylate + glycine. The catalysed reaction is (3R)-3-hydroxy-D-aspartate = glyoxylate + glycine. Its function is as follows. Catalyzes the condensation of glyoxylate and glycine into (2R,3S)-beta-hydroxyaspartate ((3S)-3-hydroxy-D-aspartate). Is essential for the growth of P.denitrificans in the presence of glycolate and glyoxylate since it functions in glyoxylate assimilation via the beta-hydroxyaspartate cycle (BHAC). Is also able to catalyze the reverse reaction in vitro, i.e. the cleavage of (3S)-3-hydroxy-D-aspartate, and that of D-threonine to a lesser extent. This chain is 3-hydroxy-D-aspartate aldolase, found in Paracoccus denitrificans (strain Pd 1222).